The chain runs to 85 residues: Conotoxin Lt28.2 (85 aa).

The signal sequence occupies residues 1 to 21 (MPKLEMMLLVLLILPLCYIDA). A propeptide spanning residues 22-40 (VGPPPPWNMEDEIIEHWQK) is cleaved from the precursor.

The protein belongs to the conotoxin D superfamily. In terms of processing, contains 5 disulfide bonds. Expressed by the venom duct.

The protein resides in the secreted. Functionally, probable neurotoxin. The protein is Conotoxin Lt28.2 of Conus litteratus (Lettered cone).